The primary structure comprises 233 residues: Ribosomal RNA small subunit methyltransferase G (233 aa).

The tract at residues 1 to 25 (MASRQSPMAVSQPDHADRSAALQLT) is disordered. 3 residues coordinate S-adenosyl-L-methionine: Gly85, Phe90, and Arg155.

It belongs to the methyltransferase superfamily. RNA methyltransferase RsmG family.

Its subcellular location is the cytoplasm. It catalyses the reaction guanosine(527) in 16S rRNA + S-adenosyl-L-methionine = N(7)-methylguanosine(527) in 16S rRNA + S-adenosyl-L-homocysteine. In terms of biological role, specifically methylates the N7 position of guanine in position 527 of 16S rRNA. This is Ribosomal RNA small subunit methyltransferase G from Rhodopseudomonas palustris (strain BisB5).